Consider the following 368-residue polypeptide: Phospho-N-acetylmuramoyl-pentapeptide-transferase (368 aa).

Helical transmembrane passes span 23–43 (YITFRAGAAAVTALIIILVFG), 72–92 (IPTMGGLMIILAIEVSGLLWA), 94–114 (IAEPFVWMVLLAIIWMGAVGF), 139–159 (VALGLIIGGYTFFDPTLSVLL), 170–190 (ITVDYGIWYIPLAIFIVTAVS), 201–221 (GLAAGSTAISVFSLAGFAYLT), 238–258 (AGEVTILSMAIVAACIGFLWF), 265–286 (VFMGDTGSLALGSAVAVIALLI), and 345–365 (KIVIRFWIIEVLLVLTSLLTL).

It belongs to the glycosyltransferase 4 family. MraY subfamily. Requires Mg(2+) as cofactor.

Its subcellular location is the cell inner membrane. It catalyses the reaction UDP-N-acetyl-alpha-D-muramoyl-L-alanyl-gamma-D-glutamyl-meso-2,6-diaminopimeloyl-D-alanyl-D-alanine + di-trans,octa-cis-undecaprenyl phosphate = di-trans,octa-cis-undecaprenyl diphospho-N-acetyl-alpha-D-muramoyl-L-alanyl-D-glutamyl-meso-2,6-diaminopimeloyl-D-alanyl-D-alanine + UMP. It participates in cell wall biogenesis; peptidoglycan biosynthesis. In terms of biological role, catalyzes the initial step of the lipid cycle reactions in the biosynthesis of the cell wall peptidoglycan: transfers peptidoglycan precursor phospho-MurNAc-pentapeptide from UDP-MurNAc-pentapeptide onto the lipid carrier undecaprenyl phosphate, yielding undecaprenyl-pyrophosphoryl-MurNAc-pentapeptide, known as lipid I. This Chloroherpeton thalassium (strain ATCC 35110 / GB-78) protein is Phospho-N-acetylmuramoyl-pentapeptide-transferase.